Here is a 363-residue protein sequence, read N- to C-terminus: Trichocyst matrix protein T4-A (363 aa).

The first 17 residues, 1–17 (MARSLTILAIVFAVATA), serve as a signal peptide directing secretion. Residues 18-52 (RVTKSESPKEILAQVNKDSFGNSILSVLQLQLATG) constitute a propeptide that is removed on maturation. Residues 85–119 (VAFEKIIADLEQEIAYHQTQIVALSNLRDSTTEAL) are a coiled coil. Positions 190 to 221 (RFEKVQAKLMESKHALFKPLINALTQLASKVD) are excised as a propeptide. Positions 244-352 (ASLLATEERQ…EVLTQKLSAA (109 aa)) form a coiled coil.

The protein belongs to the TMP family. Two components are produced by post-translational processing from the precursor peptide.

Its subcellular location is the trichocyst. In terms of biological role, structural protein that crystallize inside the trichocyst matrix. The sequence is that of Trichocyst matrix protein T4-A (T4A) from Paramecium tetraurelia.